Consider the following 1707-residue polypeptide: Kinesin-like protein KIF1A (1707 aa).

The region spanning 5–354 is the Kinesin motor domain; that stretch reads SVKVAVRVRP…LRYADRAKQI (350 aa). Residues G102, K103, S104, Y105, and S215 each contribute to the ATP site. S104 contacts Mg(2+). Residues 439–466 are a coiled coil; it reads SEEAIERLKETEKIIAELNETWEEKLRR. The FHA domain occupies 525–581; the sequence is TRVGREDAERRQDIVLSGHFIKEEHCIFRSDSRGGGEAVVTLEPCEGADTYVNGKKV. 2 coiled-coil regions span residues 637–671 and 811–831; these read EKQG…LLEQ and LEKL…AAEV. The interval 657 to 1105 is required for interaction with CALM1, PPFIA2 and TANC2; sequence QYRREREEAT…LCKDVLSPLR (449 aa). 2 disordered regions span residues 1424 to 1462 and 1536 to 1576; these read PVPE…EVPN and TDVR…EKEP. A compositionally biased stretch (low complexity) spans 1429–1453; sequence LSPASSEDSESRSSSGASSPLSAEG. The PH domain maps to 1592-1690; that stretch reads IVSKKGYLHF…WLYAFNPLLA (99 aa).

The protein belongs to the TRAFAC class myosin-kinesin ATPase superfamily. Kinesin family. Unc-104 subfamily. As to quaternary structure, dimeric motor; dimerization is required for ATP-driven processive motility. Monomer in vitro. Interacts with PPFIA1 and PPFIA4. Interacts with CALM1; the interaction is increased in presence of calcium and increases neuronal dense core vesicles motility. Interacts with PPFIA2 and TANC2; both interactions allow the recruitment of neuronal dense core vesicles to dendritic spines and decrease in presence of calcium. Interacts with SYT4 (unphosphorylated) and SYT11; both interactions increase in presence of calcium. Interacts with MADD.

The protein localises to the cytoplasm. The protein resides in the cytoskeleton. It localises to the cell projection. It is found in the neuron projection. Its subcellular location is the axon. The protein localises to the perinuclear region. The protein resides in the synapse. It localises to the cytoplasmic vesicle. It is found in the secretory vesicle. Its subcellular location is the neuronal dense core vesicle membrane. It carries out the reaction ATP + H2O + a kinesin associated with a microtubule at position (n) = ADP + phosphate a kinesin associated with a microtubule at position (n+1, toward the plus end).. Its function is as follows. Kinesin motor with a plus-end-directed microtubule motor activity, involved in anterograde axonal transport of synaptic vesicle precursors. Also required for neuronal dense core vesicles (DCVs) transport to the dendritic spines and axons. The interaction calcium-dependent with CALM1 increases vesicle motility and interaction with the scaffolding proteins PPFIA2 and TANC2 recruits DCVs to synaptic sites. The sequence is that of Kinesin-like protein KIF1A from Rattus norvegicus (Rat).